The chain runs to 333 residues: O-acetyl transferase (333 aa).

It belongs to the acyltransferase 3 family.

It is found in the host cell inner membrane. Its function is as follows. Antigenically converts S.flexneri serotype X to 3a, Y to 3b, 1a to 1b and 4a to 4b by O-acetylating the O-antigenic polysaccharide chain. The chain is O-acetyl transferase (OAC) from Shigella flexneri (Shigella flexneri bacteriophage VI).